The chain runs to 399 residues: Ankyrin repeat domain-containing protein 65 (399 aa).

ANK repeat units lie at residues 40–69 (QGWG…SVEE), 73–102 (AGRT…PVGA), 106–135 (AGRT…SAAA), 139–168 (TGLT…PGPA), 176–205 (RGWT…GLDG), 207–231 (LLVA…RVDA), 235–264 (AGAT…DPGI), 268–297 (HGRS…EVDA), 301–330 (LGLT…QVDA), and 334–363 (LRKT…SPTL). The disordered stretch occupies residues 377–399 (DLPQALPELGGGEKECEGIESTG).

The polypeptide is Ankyrin repeat domain-containing protein 65 (ANKRD65) (Homo sapiens (Human)).